The following is a 295-amino-acid chain: MTIDLASIEKFLCELATEKVGPIIKSKSGTQKDYDLKTGSRSVDIVTAIDKQVEKLIWESVKTQYPTFKFIGEESYVKGETVITDDPTFIIDPIDGTTNFVHDFPFSCTSLGLTVNKEPVVGVIYNPHINLLVSASKGNGMRVNNKDYDYKSKLESMGSLILNKSVVALQPGSAREGKNFQTKMATYEKLLSCDYGFVHGFRNLGSSAMTMAYIAMGYLDSYWDGGCYSWDVCAGWCILKEVGGRVVGANPGEWSIDVDNRTYLAVRGTINNESDEQTKYITDFWNCVDGHLKYD.

The Mg(2+) site is built by E73, D92, I94, D95, and D231. A substrate-binding site is contributed by E73. Substrate contacts are provided by residues 94–97 and D231; that span reads IDGT.

The protein belongs to the inositol monophosphatase superfamily. Requires Mg(2+) as cofactor.

The protein localises to the cytoplasm. Its subcellular location is the nucleus. It catalyses the reaction a myo-inositol phosphate + H2O = myo-inositol + phosphate. It participates in polyol metabolism; myo-inositol biosynthesis; myo-inositol from D-glucose 6-phosphate: step 2/2. Its activity is regulated as follows. Inhibited by Li(+) and Na(+). Functionally, responsible for the provision of inositol required for synthesis of phosphatidylinositol and polyphosphoinositides. This chain is Inositol monophosphatase 1 (INM1), found in Saccharomyces cerevisiae (strain ATCC 204508 / S288c) (Baker's yeast).